Reading from the N-terminus, the 98-residue chain is Integration host factor subunit alpha (98 aa).

The disordered stretch occupies residues 49–71 (FGNFDLRDKNQRPGRNPKTGEDI).

Belongs to the bacterial histone-like protein family. In terms of assembly, heterodimer of an alpha and a beta chain.

Its function is as follows. This protein is one of the two subunits of integration host factor, a specific DNA-binding protein that functions in genetic recombination as well as in transcriptional and translational control. This is Integration host factor subunit alpha from Pectobacterium atrosepticum (strain SCRI 1043 / ATCC BAA-672) (Erwinia carotovora subsp. atroseptica).